Consider the following 122-residue polypeptide: Protein YqjC (122 aa).

The signal sequence occupies residues 1-20 (MKYRIALAVSLFALSAGSYA). The segment at 65-100 (QLRADHQKKIAKQKDEVAERQQDLAEAKQKGDADKI) is disordered. The span at 66-100 (LRADHQKKIAKQKDEVAERQQDLAEAKQKGDADKI) shows a compositional bias: basic and acidic residues.

This Escherichia coli (strain K12) protein is Protein YqjC (yqjC).